Consider the following 890-residue polypeptide: Alanine--tRNA ligase (890 aa).

Zn(2+) is bound by residues histidine 572, histidine 576, cysteine 674, and histidine 678.

This sequence belongs to the class-II aminoacyl-tRNA synthetase family. The cofactor is Zn(2+).

The protein localises to the cytoplasm. The catalysed reaction is tRNA(Ala) + L-alanine + ATP = L-alanyl-tRNA(Ala) + AMP + diphosphate. Catalyzes the attachment of alanine to tRNA(Ala) in a two-step reaction: alanine is first activated by ATP to form Ala-AMP and then transferred to the acceptor end of tRNA(Ala). Also edits incorrectly charged Ser-tRNA(Ala) and Gly-tRNA(Ala) via its editing domain. The polypeptide is Alanine--tRNA ligase (Prochlorococcus marinus (strain MIT 9211)).